Here is a 150-residue protein sequence, read N- to C-terminus: Arginine repressor (150 aa).

It belongs to the ArgR family.

The protein resides in the cytoplasm. Its pathway is amino-acid biosynthesis; L-arginine biosynthesis [regulation]. Regulates arginine biosynthesis genes. The chain is Arginine repressor from Desulforudis audaxviator (strain MP104C).